Reading from the N-terminus, the 908-residue chain is Mycobactin import ATP-binding/permease protein IrtA (908 aa).

At methionine 1–proline 329 the chain is on the cytoplasmic side. The FAD-binding FR-type domain maps to alanine 15–glutamate 124. The siderophore interaction domain stretch occupies residues arginine 16 to alanine 245. Residues arginine 70 to threonine 73, aspartate 87 to histidine 91, alanine 97 to serine 98, and threonine 241 to glycine 243 contribute to the FAD site. The segment at alanine 245–arginine 311 is disordered. Residues threonine 253 to proline 309 are compositionally biased toward low complexity. Residues leucine 330–leucine 350 form a helical membrane-spanning segment. The ABC transmembrane type-1 domain maps to isoleucine 331 to threonine 613. At leucine 351–glycine 371 the chain is on the periplasmic side. Residues leucine 372 to leucine 392 form a helical membrane-spanning segment. At histidine 393–histidine 444 the chain is on the cytoplasmic side. A helical membrane pass occupies residues alanine 445–valine 465. Residues alanine 466 to arginine 469 are Periplasmic-facing. Residues valine 470–isoleucine 490 form a helical membrane-spanning segment. Over glutamine 491–aspartate 557 the chain is Cytoplasmic. Residues leucine 558–valine 578 form a helical membrane-spanning segment. Topologically, residues threonine 579–asparagine 586 are periplasmic. Residues leucine 587–glycine 607 form a helical membrane-spanning segment. Topologically, residues leucine 608–arginine 908 are cytoplasmic. The region spanning valine 654–serine 887 is the ABC transporter domain. Glycine 687–serine 694 is a binding site for ATP.

The protein belongs to the ABC transporter superfamily. Siderophore-Fe(3+) uptake transporter (SIUT) (TC 3.A.1.21) family. Forms a heterodimer with IrtB. The cofactor is FAD.

It localises to the cell inner membrane. Its activity is regulated as follows. The ATPase activity of IrtAB is stimulated more than 38-fold in the presence of Fe-MBT, and more than 10-fold in the presence of Fe-cMBT. In terms of biological role, part of the ABC transporter complex IrtAB involved in the import of iron-bound mycobactin (Fe-MBT) and carboxymycobactin (Fe-cMBT). Has a preference for Fe-MBT over Fe-cMBT. Mycobactins are then reduced by the siderophore interaction domain to facilitate iron release in the bacterial cell. Transmembrane domains (TMD) form a pore in the membrane and the ATP-binding domain (NBD) is responsible for energy generation. This Mycolicibacterium thermoresistibile (strain ATCC 19527 / DSM 44167 / CIP 105390 / JCM 6362 / NCTC 10409 / 316) (Mycobacterium thermoresistibile) protein is Mycobactin import ATP-binding/permease protein IrtA.